The chain runs to 206 residues: Small ribosomal subunit protein eS1 (206 aa).

It belongs to the eukaryotic ribosomal protein eS1 family.

The protein is Small ribosomal subunit protein eS1 of Natronomonas pharaonis (strain ATCC 35678 / DSM 2160 / CIP 103997 / JCM 8858 / NBRC 14720 / NCIMB 2260 / Gabara) (Halobacterium pharaonis).